The sequence spans 406 residues: RILP-like protein 1 (406 aa).

An RH1 domain is found at 5–99; sequence QLGAALDKSA…LEKEKKHKKE (95 aa). Residues 105–319 are a coiled coil; that stretch reads DVWRGEAQDL…KVFMLQEEIA (215 aa). 2 disordered regions span residues 234 to 272 and 323 to 351; these read EVSS…PAQE and SEEQ…NFQP. Residues 241-257 are compositionally biased toward basic and acidic residues; it reads EVSRLKEKLKEQSRSNE. In terms of domain architecture, RH2 spans 289–358; sequence RPRFTLQELR…FQPESGIKRL (70 aa). Polar residues predominate over residues 340–351; the sequence is TLRTNPRSNFQP.

This sequence belongs to the RILPL family.

It is found in the cytoplasm. The protein resides in the cytosol. The protein localises to the cytoskeleton. Its subcellular location is the microtubule organizing center. It localises to the centrosome. It is found in the cell projection. The protein resides in the cilium. In terms of biological role, plays a role in the regulation of cell shape and polarity. Plays a role in cellular protein transport, including protein transport away from primary cilia. Neuroprotective protein. This Danio rerio (Zebrafish) protein is RILP-like protein 1 (rilpl1).